We begin with the raw amino-acid sequence, 81 residues long: Putative membrane protein insertion efficiency factor (81 aa).

It belongs to the UPF0161 family.

It localises to the cell inner membrane. In terms of biological role, could be involved in insertion of integral membrane proteins into the membrane. This Pseudomonas syringae pv. tomato (strain ATCC BAA-871 / DC3000) protein is Putative membrane protein insertion efficiency factor.